Consider the following 312-residue polypeptide: MPIKIPAHLPAYDILTREGVMVMSEDQAARQDIRPLRIGLLNLMPKKIQTETQFARLIGATPLQIELSLIRMTEHQTKTTASEHMEEFYRPFQEVRDEKFDGLIITGAPIEHLEFSDVTYWDELGEVFAWTQSNVHSTFGVCWGGMAMINHFHGIRKHMLDHKAFGCFRHRNLDPASPYLRGFSDDFVIPVSRWTEVKQAEVDAVPELVTLLGSDEVGPCLISDPGHRALYIFNHFEYDSDTLKQEYDRDVEGGTAINVPINYYPDDDPSRKPLNRWRSHAHLLYGNWISEIYETTPYDMARIGLESTDLRG.

Catalysis depends on Cys-142, which acts as the Acyl-thioester intermediate. 2 residues coordinate substrate: Lys-163 and Ser-192. His-235 acts as the Proton acceptor in catalysis. Glu-237 is an active-site residue. Position 249 (Arg-249) interacts with substrate.

This sequence belongs to the MetA family.

Its subcellular location is the cytoplasm. It carries out the reaction L-homoserine + acetyl-CoA = O-acetyl-L-homoserine + CoA. The protein operates within amino-acid biosynthesis; L-methionine biosynthesis via de novo pathway; O-acetyl-L-homoserine from L-homoserine: step 1/1. Functionally, transfers an acetyl group from acetyl-CoA to L-homoserine, forming acetyl-L-homoserine. The polypeptide is Homoserine O-acetyltransferase (Ruegeria pomeroyi (strain ATCC 700808 / DSM 15171 / DSS-3) (Silicibacter pomeroyi)).